We begin with the raw amino-acid sequence, 114 residues long: Ribosome-binding factor A (114 aa).

It belongs to the RbfA family. In terms of assembly, monomer. Binds 30S ribosomal subunits, but not 50S ribosomal subunits or 70S ribosomes.

The protein resides in the cytoplasm. Functionally, one of several proteins that assist in the late maturation steps of the functional core of the 30S ribosomal subunit. Associates with free 30S ribosomal subunits (but not with 30S subunits that are part of 70S ribosomes or polysomes). Required for efficient processing of 16S rRNA. May interact with the 5'-terminal helix region of 16S rRNA. The sequence is that of Ribosome-binding factor A from Staphylococcus saprophyticus subsp. saprophyticus (strain ATCC 15305 / DSM 20229 / NCIMB 8711 / NCTC 7292 / S-41).